The sequence spans 450 residues: Phosphoglucosamine mutase (450 aa).

S102 functions as the Phosphoserine intermediate in the catalytic mechanism. 4 residues coordinate Mg(2+): S102, D243, D245, and D247. S102 bears the Phosphoserine mark.

The protein belongs to the phosphohexose mutase family. Mg(2+) serves as cofactor. Post-translationally, activated by phosphorylation.

It catalyses the reaction alpha-D-glucosamine 1-phosphate = D-glucosamine 6-phosphate. Functionally, catalyzes the conversion of glucosamine-6-phosphate to glucosamine-1-phosphate. This is Phosphoglucosamine mutase from Rhizobium etli (strain ATCC 51251 / DSM 11541 / JCM 21823 / NBRC 15573 / CFN 42).